Here is a 390-residue protein sequence, read N- to C-terminus: NADH-quinone oxidoreductase subunit D (390 aa).

Belongs to the complex I 49 kDa subunit family. NDH-1 is composed of 14 different subunits. Subunits NuoB, C, D, E, F, and G constitute the peripheral sector of the complex.

It is found in the cell membrane. The catalysed reaction is a quinone + NADH + 5 H(+)(in) = a quinol + NAD(+) + 4 H(+)(out). In terms of biological role, NDH-1 shuttles electrons from NADH, via FMN and iron-sulfur (Fe-S) centers, to quinones in the respiratory chain. The immediate electron acceptor for the enzyme in this species is believed to be ubiquinone. Couples the redox reaction to proton translocation (for every two electrons transferred, four hydrogen ions are translocated across the cytoplasmic membrane), and thus conserves the redox energy in a proton gradient. The chain is NADH-quinone oxidoreductase subunit D from Wolbachia pipientis subsp. Culex pipiens (strain wPip).